The primary structure comprises 44 residues: MRDLKTYLSVAPVASTLWFVALAGLLIEINRLFPDALTFPFFSF.

Residues 7–27 (YLSVAPVASTLWFVALAGLLI) form a helical membrane-spanning segment.

Belongs to the PsaJ family.

It is found in the plastid. Its subcellular location is the chloroplast thylakoid membrane. Functionally, may help in the organization of the PsaE and PsaF subunits. In Cicer arietinum (Chickpea), this protein is Photosystem I reaction center subunit IX.